The following is a 91-amino-acid chain: Ragulator complex protein LAMTOR5 homolog (91 aa).

This sequence belongs to the LAMTOR5 family. As to quaternary structure, part of the Ragulator complex.

It is found in the cytoplasm. The protein localises to the lysosome. Its function is as follows. Regulator of the TOR pathway, a signaling cascade that promotes cell growth in response to growth factors, energy levels, and amino acids. As part of the Ragulator complex, may activate the TOR signaling cascade in response to amino acids. This chain is Ragulator complex protein LAMTOR5 homolog, found in Ixodes scapularis (Black-legged tick).